Consider the following 104-residue polypeptide: DNA-directed RNA polymerase subunit omega (104 aa).

The segment at 53–104 (EIESGNVTIHPDPEGKREAVRRRIEEEKRRKEEEEKKIKEQIAKEKEDGEKI) is disordered. The span at 63–104 (PDPEGKREAVRRRIEEEKRRKEEEEKKIKEQIAKEKEDGEKI) shows a compositional bias: basic and acidic residues.

Belongs to the RNA polymerase subunit omega family. As to quaternary structure, the RNAP catalytic core consists of 2 alpha, 1 beta, 1 beta' and 1 omega subunit. When a sigma factor is associated with the core the holoenzyme is formed, which can initiate transcription.

It carries out the reaction RNA(n) + a ribonucleoside 5'-triphosphate = RNA(n+1) + diphosphate. Its function is as follows. Promotes RNA polymerase assembly. Latches the N- and C-terminal regions of the beta' subunit thereby facilitating its interaction with the beta and alpha subunits. The sequence is that of DNA-directed RNA polymerase subunit omega from Streptococcus pneumoniae serotype 2 (strain D39 / NCTC 7466).